A 222-amino-acid chain; its full sequence is UPF0758 protein Cpar_0627 (222 aa).

In terms of domain architecture, MPN spans Lys-100 to Leu-222. Zn(2+) contacts are provided by His-171, His-173, and Asp-184. The JAMM motif motif lies at His-171–Asp-184.

Belongs to the UPF0758 family.

This is UPF0758 protein Cpar_0627 from Chlorobaculum parvum (strain DSM 263 / NCIMB 8327) (Chlorobium vibrioforme subsp. thiosulfatophilum).